Here is a 573-residue protein sequence, read N- to C-terminus: Putative 15-O-acetyltransferase SAT12 (573 aa).

The disordered stretch occupies residues 1–40 (MLDDDCSPTSSSEMSNASSREASITSRSSSTSGNNSLPED). Over residues 7 to 36 (SPTSSSEMSNASSREASITSRSSSTSGNNS) the composition is skewed to low complexity.

Belongs to the trichothecene O-acetyltransferase family.

It participates in mycotoxin biosynthesis. Its function is as follows. Putative 15-O-acetyltransferase; part of the satratoxin SC2 cluster involved in the biosynthesis of satratoxins, trichothecene mycotoxins that are associated with human food poisonings. Satratoxins are suggested to be made by products of multiple gene clusters (SC1, SC2 and SC3) that encode 21 proteins in all, including polyketide synthases, acetyltransferases, and other enzymes expected to modify the trichothecene skeleton. SC1 encodes 10 proteins, SAT1 to SAT10. The largest are SAT8, which encodes a putative polyketide synthase (PKS) with a conventional non-reducing architecture, and SAT10, a putative protein containing four ankyrin repeats and thus may be involved in protein scaffolding. The putative short-chain reductase SAT3 may assist the PKS in some capacity. SAT6 contains a secretory lipase domain and acts probably as a trichothecene esterase. SAT5 encodes a putative acetyltransferase, and so, with SAT6, may affect endogenous protection from toxicity. The probable transcription factor SAT9 may regulate the expression of the SC1 cluster. SC2 encodes proteins SAT11 to SAT16, the largest of which encodes the putative reducing PKS SAT13. SAT11 is a cytochrome P450 monooxygenase, while SAT14 and SAT16 are probable acetyltransferases. The SC2 cluster may be regulated by the transcription factor SAT15. SC3 is a small cluster that encodes 5 proteins, SAT17 to SAT21. SAT21 is a putative MFS-type transporter which may have a role in exporting secondary metabolites. The four other proteins putatively encoded in SC3 include the taurine hydroxylase-like protein SAT17, the O-methyltransferase SAT18, the acetyltransferase SAT19, and the Cys6-type zinc finger SAT20, the latter being probably involved in regulation of SC3 expression. This is Putative 15-O-acetyltransferase SAT12 from Stachybotrys chartarum (strain CBS 109288 / IBT 7711) (Toxic black mold).